The sequence spans 492 residues: uncharacterized protein (492 aa).

Transmembrane regions (helical) follow at residues 16 to 36 (FIAF…VMTM), 39 to 59 (VGPF…GVVL), 107 to 127 (SFNG…IPVV), 133 to 153 (IIIG…FISL), 162 to 182 (AIFY…ILGI), 210 to 230 (IIFI…LASI), 243 to 263 (FLIA…IISG), 291 to 311 (LVGG…NSLA), 350 to 370 (VLIS…IPFL), 394 to 414 (MAAA…FMIF), 429 to 449 (VSYV…LFPF), and 454 to 474 (VFNT…VGFF).

This sequence to M.genitalium MG225.

It is found in the cell membrane. This is an uncharacterized protein from Mycoplasma genitalium (strain ATCC 33530 / DSM 19775 / NCTC 10195 / G37) (Mycoplasmoides genitalium).